The following is an 819-amino-acid chain: Probable phosphoenolpyruvate synthase (819 aa).

Residue His-441 is the Tele-phosphohistidine intermediate of the active site. Residues Arg-540, Arg-587, Glu-684, Gly-706, Thr-707, Asn-708, and Asp-709 each coordinate substrate. Glu-684 contributes to the Mg(2+) binding site. Asp-709 is a Mg(2+) binding site. The active-site Proton donor is Cys-756.

Belongs to the PEP-utilizing enzyme family. The cofactor is Mg(2+).

It catalyses the reaction pyruvate + ATP + H2O = phosphoenolpyruvate + AMP + phosphate + 2 H(+). It participates in carbohydrate biosynthesis; gluconeogenesis. Functionally, catalyzes the phosphorylation of pyruvate to phosphoenolpyruvate. The polypeptide is Probable phosphoenolpyruvate synthase (ppsA) (Pyrococcus abyssi (strain GE5 / Orsay)).